The primary structure comprises 83 residues: Small ribosomal subunit protein bS20 (83 aa).

The disordered stretch occupies residues 1–21 (MPNIKSAIKRVRTTETAEERN). A compositionally biased stretch (basic and acidic residues) spans 12–21 (RTTETAEERN).

It belongs to the bacterial ribosomal protein bS20 family.

Its function is as follows. Binds directly to 16S ribosomal RNA. The protein is Small ribosomal subunit protein bS20 of Staphylococcus epidermidis (strain ATCC 35984 / DSM 28319 / BCRC 17069 / CCUG 31568 / BM 3577 / RP62A).